Reading from the N-terminus, the 46-residue chain is Photosystem II reaction center protein Psb30 (46 aa).

M1 carries the N-formylmethionine modification. Residues 1 to 20 lie on the Lumenal side of the membrane; sequence MGIFNGIIEFLSNINFEVIA. A helical membrane pass occupies residues 21–38; sequence QLTMIAMIGIAGPMIIFL. Residues 39 to 46 are Cytoplasmic-facing; the sequence is LAVRRGNL.

The protein belongs to the Psb30/Ycf12 family. In terms of assembly, PSII is composed of 1 copy each of membrane proteins PsbA, PsbB, PsbC, PsbD, PsbE, PsbF, PsbH, PsbI, PsbJ, PsbK, PsbL, PsbM, PsbT, PsbX, PsbY, PsbZ, Psb30/Ycf12, peripheral proteins PsbO, CyanoQ (PsbQ), PsbU, PsbV and a large number of cofactors. It forms dimeric complexes. Part of a photosystem II (PSII) assembly intermediate complex PSII-I; crystallized from a strain deleted of psbJ, it forms monomeric PSII before addition of the oxygen evolving complex. PSII-I includes 3 assembly factors not found in mature PSII (Psb27, Psb28 and Psb34). Requires PSII binds multiple chlorophylls, carotenoids and specific lipids. as cofactor.

The protein resides in the cellular thylakoid membrane. In terms of biological role, a core subunit of photosystem II (PSII). PSII is a light-driven water plastoquinone oxidoreductase, using light energy to abstract electrons from H(2)O, generating a proton gradient subsequently used for ATP formation. Helps stabilize PSII. The chain is Photosystem II reaction center protein Psb30 from Thermosynechococcus vestitus (strain NIES-2133 / IAM M-273 / BP-1).